The sequence spans 279 residues: Acyl-[acyl-carrier-protein]--UDP-N-acetylglucosamine O-acyltransferase (279 aa).

This sequence belongs to the transferase hexapeptide repeat family. LpxA subfamily. As to quaternary structure, homotrimer.

The protein resides in the cytoplasm. The catalysed reaction is a (3R)-hydroxyacyl-[ACP] + UDP-N-acetyl-alpha-D-glucosamine = a UDP-3-O-[(3R)-3-hydroxyacyl]-N-acetyl-alpha-D-glucosamine + holo-[ACP]. Its pathway is glycolipid biosynthesis; lipid IV(A) biosynthesis; lipid IV(A) from (3R)-3-hydroxytetradecanoyl-[acyl-carrier-protein] and UDP-N-acetyl-alpha-D-glucosamine: step 1/6. In terms of biological role, involved in the biosynthesis of lipid A, a phosphorylated glycolipid that anchors the lipopolysaccharide to the outer membrane of the cell. This is Acyl-[acyl-carrier-protein]--UDP-N-acetylglucosamine O-acyltransferase from Mesorhizobium japonicum (strain LMG 29417 / CECT 9101 / MAFF 303099) (Mesorhizobium loti (strain MAFF 303099)).